Here is a 274-residue protein sequence, read N- to C-terminus: Elongation factor Ts (274 aa).

The segment at 79–82 is involved in Mg(2+) ion dislocation from EF-Tu; the sequence is TDFV.

Belongs to the EF-Ts family.

The protein resides in the cytoplasm. Its function is as follows. Associates with the EF-Tu.GDP complex and induces the exchange of GDP to GTP. It remains bound to the aminoacyl-tRNA.EF-Tu.GTP complex up to the GTP hydrolysis stage on the ribosome. This chain is Elongation factor Ts, found in Azobacteroides pseudotrichonymphae genomovar. CFP2.